A 342-amino-acid chain; its full sequence is MTHSLKPWNTFGIDHCAKHIACAENEQQILSAWQQATREGLPVMILGEGSNVLFLENYAGTVILNRLKGIEVNETADAWHLHVGAGENWHQLVRYALDNNMPGLENLALIPGCVGSSPIQNIGAYGVELQRVCDYVDCVELETGKRLRLSAAECRFGYRDSIFKNEYQDRVAIVAVGLRLSKQWQPVLTYGDLTRLDPKTVTAQQVFDAVCHMRTTKLPDPKVNGNAGSFFKNPVVAADIAMELLERFPNAPHYPQADGSVKLAAGWLIDQCQLKGVTIGGAAVHRQQALVLINANDATSKDVVALAHHVRQKVGEKFNVWLEPEVRFIGRSGEVNAVESIA.

The 171-residue stretch at 13–183 (IDHCAKHIAC…VAVGLRLSKQ (171 aa)) folds into the FAD-binding PCMH-type domain. The active site involves Arg159. The active-site Proton donor is the Ser229. Glu325 is a catalytic residue.

The protein belongs to the MurB family. FAD is required as a cofactor.

The protein resides in the cytoplasm. The catalysed reaction is UDP-N-acetyl-alpha-D-muramate + NADP(+) = UDP-N-acetyl-3-O-(1-carboxyvinyl)-alpha-D-glucosamine + NADPH + H(+). It participates in cell wall biogenesis; peptidoglycan biosynthesis. In terms of biological role, cell wall formation. In Salmonella choleraesuis (strain SC-B67), this protein is UDP-N-acetylenolpyruvoylglucosamine reductase.